Consider the following 339-residue polypeptide: Tetraacyldisaccharide 4'-kinase (339 aa).

62-69 (VAGGTGKT) provides a ligand contact to ATP.

Belongs to the LpxK family.

It carries out the reaction a lipid A disaccharide + ATP = a lipid IVA + ADP + H(+). It participates in glycolipid biosynthesis; lipid IV(A) biosynthesis; lipid IV(A) from (3R)-3-hydroxytetradecanoyl-[acyl-carrier-protein] and UDP-N-acetyl-alpha-D-glucosamine: step 6/6. Its function is as follows. Transfers the gamma-phosphate of ATP to the 4'-position of a tetraacyldisaccharide 1-phosphate intermediate (termed DS-1-P) to form tetraacyldisaccharide 1,4'-bis-phosphate (lipid IVA). The chain is Tetraacyldisaccharide 4'-kinase from Xylella fastidiosa (strain M23).